The following is a 240-amino-acid chain: Competence protein ComFC (240 aa).

The protein belongs to the ComF/GntX family. Monomer and dimer in solution. Interacts with ComFA and DprA; ComFA-ComFC form rings about 150 Angstroms in diameter with apparent 6-fold symmetry.

Involved in transformation (genetic competence for DNA uptake). The polypeptide is Competence protein ComFC (comFC) (Bacillus subtilis (strain 168)).